Here is a 375-residue protein sequence, read N- to C-terminus: Heat-inducible transcription repressor HrcA (375 aa).

Low complexity predominate over residues 307-318; sequence ATDGATHAAASS. Residues 307-331 are disordered; it reads ATDGATHAAASSQTENQSGDDTRQA.

Belongs to the HrcA family.

Functionally, negative regulator of class I heat shock genes (grpE-dnaK-dnaJ and groELS operons). Prevents heat-shock induction of these operons. The sequence is that of Heat-inducible transcription repressor HrcA from Bifidobacterium adolescentis (strain ATCC 15703 / DSM 20083 / NCTC 11814 / E194a).